Here is a 763-residue protein sequence, read N- to C-terminus: Putative alpha-1,3-mannosyltransferase MNN15 (763 aa).

The Cytoplasmic segment spans residues M1 to K7. The helical transmembrane segment at I8 to V28 threads the bilayer. Topologically, residues D29 to I763 are lumenal. N-linked (GlcNAc...) asparagine glycosylation is found at N71, N157, and N169. The disordered stretch occupies residues L617–P659. The segment covering K649–P659 has biased composition (basic and acidic residues).

It belongs to the MNN1/MNT family.

Its subcellular location is the golgi apparatus membrane. It functions in the pathway protein modification; protein glycosylation. Responsible for addition of the terminal mannose residues to the outer chain of core N-linked polysaccharides and to O-linked mannotriose. Implicated in late Golgi modifications. This is Putative alpha-1,3-mannosyltransferase MNN15 (MNN15) from Candida albicans (strain SC5314 / ATCC MYA-2876) (Yeast).